A 362-amino-acid chain; its full sequence is Probable secreted beta-glucosidase UTH1 (362 aa).

Positions 1-17 are cleaved as a signal peptide; sequence MKLSALLALSASTAVLA.

This sequence belongs to the SUN family.

It is found in the mitochondrion outer membrane. Its subcellular location is the secreted. It localises to the cell wall. In terms of biological role, involved in aging, oxidative stress response, and in the regulation of mitochondrial biogenesis. Inactivation of UTH1 increases life span, leads to higher resistance to heat stress and to hydrogen peroxide, and increases sensitivity to the superoxide radical-generating drug paraquat and to copper. Also required for the selective autophagic degradation of mitochondria (mitophagy) in response to nitrogen starvation. May play a role in cell wall morphogenesis and septation. Involved in the remodeling of the cell wall during the various phases of yeast culture development and under various environmental conditions and plays a role in septation. Involved in cell sensitivity to boric acid. The protein is Probable secreted beta-glucosidase UTH1 (UTH1) of Saccharomyces cerevisiae (strain YJM789) (Baker's yeast).